We begin with the raw amino-acid sequence, 400 residues long: Enoyl-[acyl-carrier-protein] reductase [NADH] 1 (400 aa).

Residues 48–53, 74–75, 111–112, and 139–140 contribute to the NAD(+) site; these read GASSGY, FE, DA, and LA. Y225 provides a ligand contact to substrate. The active-site Proton donor is Y235. NAD(+) is bound by residues K244 and 273–275; that span reads VVT.

Belongs to the TER reductase family. In terms of assembly, monomer.

The catalysed reaction is a 2,3-saturated acyl-[ACP] + NAD(+) = a (2E)-enoyl-[ACP] + NADH + H(+). Its pathway is lipid metabolism; fatty acid biosynthesis. Functionally, involved in the final reduction of the elongation cycle of fatty acid synthesis (FAS II). Catalyzes the reduction of a carbon-carbon double bond in an enoyl moiety that is covalently linked to an acyl carrier protein (ACP). In Vibrio vulnificus (strain CMCP6), this protein is Enoyl-[acyl-carrier-protein] reductase [NADH] 1.